A 308-amino-acid chain; its full sequence is Ribosomal RNA large subunit methyltransferase F (308 aa).

Belongs to the methyltransferase superfamily. METTL16/RlmF family.

It localises to the cytoplasm. The enzyme catalyses adenosine(1618) in 23S rRNA + S-adenosyl-L-methionine = N(6)-methyladenosine(1618) in 23S rRNA + S-adenosyl-L-homocysteine + H(+). Specifically methylates the adenine in position 1618 of 23S rRNA. The sequence is that of Ribosomal RNA large subunit methyltransferase F from Escherichia coli O157:H7.